Consider the following 64-residue polypeptide: Large ribosomal subunit protein uL30 (64 aa).

This sequence belongs to the universal ribosomal protein uL30 family. Part of the 50S ribosomal subunit.

The chain is Large ribosomal subunit protein uL30 from Beijerinckia indica subsp. indica (strain ATCC 9039 / DSM 1715 / NCIMB 8712).